We begin with the raw amino-acid sequence, 529 residues long: Bifunctional purine biosynthesis protein PurH (529 aa).

The MGS-like domain occupies 1 to 148 (MQQRRPVRRA…KNHKDVAIVV (148 aa)).

The protein belongs to the PurH family.

The catalysed reaction is (6R)-10-formyltetrahydrofolate + 5-amino-1-(5-phospho-beta-D-ribosyl)imidazole-4-carboxamide = 5-formamido-1-(5-phospho-D-ribosyl)imidazole-4-carboxamide + (6S)-5,6,7,8-tetrahydrofolate. It carries out the reaction IMP + H2O = 5-formamido-1-(5-phospho-D-ribosyl)imidazole-4-carboxamide. Its pathway is purine metabolism; IMP biosynthesis via de novo pathway; 5-formamido-1-(5-phospho-D-ribosyl)imidazole-4-carboxamide from 5-amino-1-(5-phospho-D-ribosyl)imidazole-4-carboxamide (10-formyl THF route): step 1/1. It functions in the pathway purine metabolism; IMP biosynthesis via de novo pathway; IMP from 5-formamido-1-(5-phospho-D-ribosyl)imidazole-4-carboxamide: step 1/1. The chain is Bifunctional purine biosynthesis protein PurH from Salmonella schwarzengrund (strain CVM19633).